The following is a 358-amino-acid chain: Peptide chain release factor 1 (358 aa).

Residue Q235 is modified to N5-methylglutamine.

It belongs to the prokaryotic/mitochondrial release factor family. Methylated by PrmC. Methylation increases the termination efficiency of RF1.

The protein localises to the cytoplasm. In terms of biological role, peptide chain release factor 1 directs the termination of translation in response to the peptide chain termination codons UAG and UAA. This Neisseria meningitidis serogroup C (strain 053442) protein is Peptide chain release factor 1.